The primary structure comprises 165 residues: Dihydrofolate reductase type A13 (165 aa).

One can recognise a DHFR domain in the interval 7 to 162 (RIYLVAAMGA…ITYTHSVYAR (156 aa)).

It belongs to the dihydrofolate reductase family. Homodimer.

It catalyses the reaction (6S)-5,6,7,8-tetrahydrofolate + NADP(+) = 7,8-dihydrofolate + NADPH + H(+). The protein operates within cofactor biosynthesis; tetrahydrofolate biosynthesis; 5,6,7,8-tetrahydrofolate from 7,8-dihydrofolate: step 1/1. Functionally, key enzyme in folate metabolism. Catalyzes an essential reaction for de novo glycine and purine synthesis, and for DNA precursor synthesis. In Escherichia coli, this protein is Dihydrofolate reductase type A13 (dfrA13).